A 639-amino-acid chain; its full sequence is UvrABC system protein C (639 aa).

A compositionally biased stretch (acidic residues) spans 1-16 (MTDLPVDEPDRDDGAD). The segment at 1–28 (MTDLPVDEPDRDDGADQPDAGADPATPR) is disordered. Positions 17–27 (QPDAGADPATP) are enriched in low complexity. One can recognise a GIY-YIG domain in the interval 42 to 120 (SSPGVYRMID…IKKLKPRYNI (79 aa)). A UVR domain is found at 230–265 (KALQHDLAKRMDEAAQALDYEQAAIFRDRIKALTNV).

Belongs to the UvrC family. As to quaternary structure, interacts with UvrB in an incision complex.

The protein localises to the cytoplasm. Functionally, the UvrABC repair system catalyzes the recognition and processing of DNA lesions. UvrC both incises the 5' and 3' sides of the lesion. The N-terminal half is responsible for the 3' incision and the C-terminal half is responsible for the 5' incision. The chain is UvrABC system protein C from Rhodospirillum rubrum (strain ATCC 11170 / ATH 1.1.1 / DSM 467 / LMG 4362 / NCIMB 8255 / S1).